Consider the following 95-residue polypeptide: Protein TusB (95 aa).

This sequence belongs to the DsrH/TusB family. In terms of assembly, heterohexamer, formed by a dimer of trimers. The hexameric TusBCD complex contains 2 copies each of TusB, TusC and TusD. The TusBCD complex interacts with TusE.

It is found in the cytoplasm. In terms of biological role, part of a sulfur-relay system required for 2-thiolation of 5-methylaminomethyl-2-thiouridine (mnm(5)s(2)U) at tRNA wobble positions. The chain is Protein TusB from Buchnera aphidicola subsp. Acyrthosiphon pisum (strain 5A).